The sequence spans 103 residues: Large ribosomal subunit protein bL21 (103 aa).

It belongs to the bacterial ribosomal protein bL21 family. Part of the 50S ribosomal subunit. Contacts protein L20.

In terms of biological role, this protein binds to 23S rRNA in the presence of protein L20. The sequence is that of Large ribosomal subunit protein bL21 from Nitrosomonas europaea (strain ATCC 19718 / CIP 103999 / KCTC 2705 / NBRC 14298).